Consider the following 375-residue polypeptide: UDP-N-acetylglucosamine--N-acetylmuramyl-(pentapeptide) pyrophosphoryl-undecaprenol N-acetylglucosamine transferase (375 aa).

Residues 15-17, N126, R169, S197, and Q298 contribute to the UDP-N-acetyl-alpha-D-glucosamine site; that span reads TGG.

The protein belongs to the glycosyltransferase 28 family. MurG subfamily.

The protein localises to the cell inner membrane. It catalyses the reaction di-trans,octa-cis-undecaprenyl diphospho-N-acetyl-alpha-D-muramoyl-L-alanyl-D-glutamyl-meso-2,6-diaminopimeloyl-D-alanyl-D-alanine + UDP-N-acetyl-alpha-D-glucosamine = di-trans,octa-cis-undecaprenyl diphospho-[N-acetyl-alpha-D-glucosaminyl-(1-&gt;4)]-N-acetyl-alpha-D-muramoyl-L-alanyl-D-glutamyl-meso-2,6-diaminopimeloyl-D-alanyl-D-alanine + UDP + H(+). The protein operates within cell wall biogenesis; peptidoglycan biosynthesis. Functionally, cell wall formation. Catalyzes the transfer of a GlcNAc subunit on undecaprenyl-pyrophosphoryl-MurNAc-pentapeptide (lipid intermediate I) to form undecaprenyl-pyrophosphoryl-MurNAc-(pentapeptide)GlcNAc (lipid intermediate II). This is UDP-N-acetylglucosamine--N-acetylmuramyl-(pentapeptide) pyrophosphoryl-undecaprenol N-acetylglucosamine transferase from Rhodopseudomonas palustris (strain BisB18).